The primary structure comprises 33 residues: Dermaseptin-H9 (33 aa).

Leu-33 bears the Leucine amide mark.

The protein belongs to the frog skin active peptide (FSAP) family. Dermaseptin subfamily. As to expression, expressed by the skin glands.

It is found in the secreted. Has antimicrobial activity. The protein is Dermaseptin-H9 of Pithecopus hypochondrialis (Orange-legged leaf frog).